The sequence spans 331 residues: Flavonol synthase 1 (331 aa).

The Fe2OG dioxygenase domain maps to 191–292; that stretch reads DAIELLLKIN…RMSWPVFCSP (102 aa). Fe cation contacts are provided by His-217, Asp-219, and His-273. Arg-283 is a binding site for 2-oxoglutarate.

Belongs to the iron/ascorbate-dependent oxidoreductase family. It depends on L-ascorbate as a cofactor. Fe(2+) is required as a cofactor. Expressed in young cromes.

The enzyme catalyses a (2R,3R)-dihydroflavonol + 2-oxoglutarate + O2 = a flavonol + succinate + CO2 + H2O. It carries out the reaction (2R,3R)-dihydrokaempferol + 2-oxoglutarate + O2 = kaempferol + succinate + CO2 + H2O + H(+). It catalyses the reaction (2R,3R)-dihydroquercetin + 2-oxoglutarate + O2 = quercetin + succinate + CO2 + H2O + H(+). The catalysed reaction is (2R,3R)-dihydromyricetin + 2-oxoglutarate + O2 = myricetin + succinate + CO2 + H2O + H(+). The protein operates within flavonoid metabolism. Its function is as follows. Catalyzes the formation of flavonols from dihydroflavonols. Can act on dihydrokaempferol to produce kaempferol, on dihydroquercetin to produce quercitin and on dihydromyricetin to produce myricetin. In Crocosmia x crocosmiiflora (Montbretia), this protein is Flavonol synthase 1.